We begin with the raw amino-acid sequence, 1158 residues long: ATP-dependent helicase/deoxyribonuclease subunit B (1158 aa).

The region spanning 1 to 275 (MTLHAYLGRA…QYFNQLYRFN (275 aa)) is the UvrD-like helicase ATP-binding domain. 8-15 (GRAGTGKS) serves as a coordination point for ATP. Positions 269-583 (NQLYRFNNQD…SIGTMDLAKV (315 aa)) constitute a UvrD-like helicase C-terminal domain. 4 residues coordinate [4Fe-4S] cluster: Cys-784, Cys-1112, Cys-1115, and Cys-1121.

Belongs to the helicase family. AddB/RexB type 1 subfamily. In terms of assembly, heterodimer of AddA and AddB. Mg(2+) serves as cofactor. It depends on [4Fe-4S] cluster as a cofactor.

Its function is as follows. The heterodimer acts as both an ATP-dependent DNA helicase and an ATP-dependent, dual-direction single-stranded exonuclease. Recognizes the chi site generating a DNA molecule suitable for the initiation of homologous recombination. The AddB subunit has 5' -&gt; 3' nuclease activity but not helicase activity. This is ATP-dependent helicase/deoxyribonuclease subunit B from Staphylococcus aureus (strain MRSA252).